A 732-amino-acid polypeptide reads, in one-letter code: MSEQGKCPVTGRTAVNPVTTGGMSNRDWWPNQLHLDMLHQHSSLTNPMGEEFRYKEEFKKLDLKSVKKDLYALMTDSQEWWPADYGHYGGLFIRMAWHSAGTYRTSDGRGGGGTGNQRFAPLNSWPDNANLDKARRLLWPIKQKYGRKLSWADLMILAGNCALESMGFKTFGFGGGRVDIWEPEEDIYWGKEVEWLGSNRYSGERDLENPLAAVQMGLIYVNPEGPDGNPDPVAAGRDIRETFARMAMNDEETVALVAGGHTFGKCHGVGDPKLIGPEPEAAEIEEQGLGWKSGYGSGKGDETMTSGLEGAWTPDPIHWDMGYLGMLFKYEWELTKSPAGAWQWKPKDVAEEDLAPAAHDPSKRVPTMMTTADLAMRMDPLYGPIARRYYEHPEQFADAFARAWFKLTHRDMGPRSRYLGAEVPAEELIWQDPVPAVDHELIGEGKIKELKKRILASGLSIPELLSTAWASASTFRSSDKRGGANGSRIRLSPQKEWEVNQPEQLQRVLGKLEEIRNAFNGEQSGGKQVSLADLIVLGGCAAVEEAARRAGNDVTVPFIPGRTDASQEQTDVESFAVLEPLADGFRNYTKRKYSVTPEEMLIDRSQLLTLTATEMTVLLGGLRVLGVNFRQSPHGLFTNRPETLTNDFFVNLLDMGTEWKPLSKEHETFEGRDRKTGEVRWSATRVDLIFGSNARLRAIAEVYGSDDAQGKFVQDFVAAWNKVMNLDRFDLS.

The tryptophyl-tyrosyl-methioninium (Trp-Tyr) (with M-246) cross-link spans Trp97–Tyr220. Catalysis depends on His98, which acts as the Proton acceptor. The segment at residues Tyr220 to Met246 is a cross-link (tryptophyl-tyrosyl-methioninium (Tyr-Met) (with W-97)). His261 is a heme b binding site.

Belongs to the peroxidase family. Peroxidase/catalase subfamily. In terms of assembly, homodimer or homotetramer. Requires heme b as cofactor. Post-translationally, formation of the three residue Trp-Tyr-Met cross-link is important for the catalase, but not the peroxidase activity of the enzyme.

It carries out the reaction H2O2 + AH2 = A + 2 H2O. The catalysed reaction is 2 H2O2 = O2 + 2 H2O. Functionally, bifunctional enzyme with both catalase and broad-spectrum peroxidase activity. This chain is Catalase-peroxidase, found in Pelodictyon phaeoclathratiforme (strain DSM 5477 / BU-1).